A 477-amino-acid polypeptide reads, in one-letter code: Ribulose bisphosphate carboxylase large chain (477 aa).

The propeptide occupies 1 to 2 (MS). Pro-3 carries the post-translational modification N-acetylproline. Lys-14 carries the N6,N6,N6-trimethyllysine modification. Residues Asn-123 and Thr-173 each contribute to the substrate site. Catalysis depends on Lys-175, which acts as the Proton acceptor. Lys-177 serves as a coordination point for substrate. Lys-201, Asp-203, and Glu-204 together coordinate Mg(2+). Lys-201 is subject to N6-carboxylysine. The active-site Proton acceptor is the His-294. Residues Arg-295, His-327, and Ser-379 each contribute to the substrate site.

It belongs to the RuBisCO large chain family. Type I subfamily. As to quaternary structure, heterohexadecamer of 8 large chains and 8 small chains; disulfide-linked. The disulfide link is formed within the large subunit homodimers. Requires Mg(2+) as cofactor. Post-translationally, the disulfide bond which can form in the large chain dimeric partners within the hexadecamer appears to be associated with oxidative stress and protein turnover.

It is found in the plastid. Its subcellular location is the chloroplast. The catalysed reaction is 2 (2R)-3-phosphoglycerate + 2 H(+) = D-ribulose 1,5-bisphosphate + CO2 + H2O. The enzyme catalyses D-ribulose 1,5-bisphosphate + O2 = 2-phosphoglycolate + (2R)-3-phosphoglycerate + 2 H(+). RuBisCO catalyzes two reactions: the carboxylation of D-ribulose 1,5-bisphosphate, the primary event in carbon dioxide fixation, as well as the oxidative fragmentation of the pentose substrate in the photorespiration process. Both reactions occur simultaneously and in competition at the same active site. This chain is Ribulose bisphosphate carboxylase large chain, found in Nicotiana debneyi (Debney's tobacco).